The sequence spans 154 residues: Nascent polypeptide-associated complex subunit beta (154 aa).

The NAC-A/B domain maps to 33-98; that stretch reads EQDDTKLIEA…PQEKNVTQLI (66 aa). The interval 125 to 154 is disordered; that stretch reads APTELNAGAPAGGDEGIPDLIDGEKFDEVE.

This sequence belongs to the NAC-beta family. Part of the nascent polypeptide-associated complex (NAC), consisting of EGD2 and EGD1. NAC associates with ribosomes via EGD1.

The protein localises to the cytoplasm. It is found in the nucleus. In terms of biological role, component of the nascent polypeptide-associated complex (NAC), a dynamic component of the ribosomal exit tunnel, protecting the emerging polypeptides from interaction with other cytoplasmic proteins to ensure appropriate nascent protein targeting. The NAC complex also promotes mitochondrial protein import by enhancing productive ribosome interactions with the outer mitochondrial membrane and blocks the inappropriate interaction of ribosomes translating non-secretory nascent polypeptides with translocation sites in the membrane of the endoplasmic reticulum. EGD1 may act as a transcription factor that exert a negative effect on the expression of several genes that are transcribed by RNA polymerase II. In Scheffersomyces stipitis (strain ATCC 58785 / CBS 6054 / NBRC 10063 / NRRL Y-11545) (Yeast), this protein is Nascent polypeptide-associated complex subunit beta (EGD1).